Reading from the N-terminus, the 895-residue chain is Androgen receptor (895 aa).

The modulating stretch occupies residues 1–533 (MEVQLGLGRV…PIDYYFPPQK (533 aa)). An interaction with ZNF318 region spans residues 1–562 (MEVQLGLGRV…GSCKVFFKRA (562 aa)). Disordered stretches follow at residues 33 to 155 (VIQN…PTFP) and 175 to 211 (QLLQQQQQEAVSEGSSSGRAREASGAPTSSKDNYLGG). 2 stretches are compositionally biased toward low complexity: residues 44 to 81 (AASAAPPGASLQQQQQQQQQETSPRQQQQQQGEDGSPQ) and 175 to 200 (QLLQQQQQEAVSEGSSSGRAREASGA). S66 bears the Phosphoserine; by CDK9 mark. S79 is modified (phosphoserine). Residues 201-211 (PTSSKDNYLGG) show a composition bias toward polar residues. At Y208 the chain carries Phosphotyrosine; by CSK. S241 carries the post-translational modification Phosphoserine. Y252 carries the post-translational modification Phosphotyrosine; by CSK and TNK2. Phosphotyrosine; by CSK is present on residues Y292, Y331, Y342, and Y347. Residue Y348 is modified to Phosphotyrosine; by CSK and TNK2. Residue K371 forms a Glycyl lysine isopeptide (Lys-Gly) (interchain with G-Cter in SUMO) linkage. Residue Y378 is modified to Phosphotyrosine; by CSK. A Glycyl lysine isopeptide (Lys-Gly) (interchain with G-Cter in SUMO) cross-link involves residue K496. Phosphotyrosine; by CSK occurs at positions 510 and 527. Residues 527–894 (YYFPPQKTCL…GKVKPIYFHT (368 aa)) are interaction with LPXN. The nuclear receptor DNA-binding region spans 534-607 (TCLICGDEAS…AGMTLGARKL (74 aa)). 2 consecutive NR C4-type zinc fingers follow at residues 535 to 555 (CLICGDEASGCHYGALTCGSC) and 571 to 595 (CASRNDCTIDKFRRKNCPSCRLRKC). An interaction with HIPK3 region spans residues 547–637 (YGALTCGSCK…TEETAQKLTV (91 aa)). The interaction with CCAR1 stretch occupies residues 567–894 (QKYLCASRND…GKVKPIYFHT (328 aa)). The segment at 600–894 (MTLGARKLKK…GKVKPIYFHT (295 aa)) is interaction with KAT7. S626 is subject to Phosphoserine; by STK4/MST1. In terms of domain architecture, NR LBD spans 644–875 (ECQPIFLNVL…DFPEMMAEII (232 aa)). Positions 681 and 728 each coordinate 17beta-hydroxy-5alpha-androstan-3-one. Residues K821 and K823 each participate in a glycyl lysine isopeptide (Lys-Gly) (interchain with G-Cter in ubiquitin) cross-link. Position 853 (T853) interacts with 17beta-hydroxy-5alpha-androstan-3-one. The residue at position 891 (Y891) is a Phosphotyrosine; by CSK.

Belongs to the nuclear hormone receptor family. NR3 subfamily. In terms of assembly, binds DNA as a homodimer. Part of a ternary complex containing AR, EFCAB6/DJBP and PARK7. Interacts with HIPK3 and NR0B2 in the presence of androgen. The ligand binding domain interacts with KAT7/HBO1 in the presence of dihydrotestosterone. Interacts with EFCAB6/DJBP, PQBP1, RANBP9, RBAK, SPDEF, SRA1, TGFB1I1 and RREB1. Interacts with ZMIZ1/ZIMP10 and ZMIZ2/ZMIP7 which both enhance its transactivation activity. Interacts with SLC30A9 and RAD54L2/ARIP4. Interacts with MACROD1 (via macro domain). Interacts via the ligand-binding domain with LXXLL and FXXLF motifs from NCOA1, NCOA2, NCOA3 and MAGEA11. Interacts (via nuclear receptor DNA binding domain and nuclear receptor ligand binding domain) with NCOA4. The AR N-terminal poly-Gln region binds Ran resulting in enhancement of AR-mediated transactivation. Ran-binding decreases as the poly-Gln length increases. Interacts with HIP1 (via coiled coil domain). Interacts (via ligand-binding domain) with TRIM68. Interacts with TNK2. Interacts with USP26. Interacts with RNF6. Interacts (regulated by RNF6 probably through polyubiquitination) with RNF14; regulates AR transcriptional activity. Interacts with PRMT2 and TRIM24. Interacts with RACK1. Interacts with RANBP10; this interaction enhances dihydrotestosterone-induced AR transcriptional activity. Interacts with PRPF6 in a hormone-independent way; this interaction enhances dihydrotestosterone-induced AR transcriptional activity. Interacts with STK4/MST1. Interacts with ZIPK/DAPK3. Interacts with LPXN. Interacts with MAK. Part of a complex containing AR, MAK and NCOA3. Interacts with CRY1. Interacts with CCAR1 and GATA2. Interacts with ZNF318. Interacts with BUD31. Interacts with ARID4A. Interacts with ARID4B. Interacts (via NR LBD domain) with ZBTB7A; the interaction is direct and androgen-dependent. Interacts with NCOR1. Interacts with NCOR2. Interacts with CRY2 in a ligand-dependent manner. In terms of processing, phosphorylated in prostate cancer cells in response to several growth factors including EGF. Phosphorylation is induced by c-Src kinase (CSK). Tyr-510 is one of the major phosphorylation sites and an increase in phosphorylation and Src kinase activity is associated with prostate cancer progression. Phosphorylation by TNK2 enhances the DNA-binding and transcriptional activity. Phosphorylation at Ser-66 by CDK9 regulates AR promoter selectivity and cell growth. Sumoylated on Lys-371 (major) and Lys-496. Ubiquitinated. Deubiquitinated by USP26. 'Lys-6' and 'Lys-27'-linked polyubiquitination by RNF6 modulates AR transcriptional activity and specificity. Post-translationally, palmitoylated by ZDHHC7 and ZDHHC21. Palmitoylation is required for plasma membrane targeting and for rapid intracellular signaling via ERK and AKT kinases and cAMP generation.

The protein resides in the nucleus. It localises to the cytoplasm. Functionally, steroid hormone receptors are ligand-activated transcription factors that regulate eukaryotic gene expression and affect cellular proliferation and differentiation in target tissues. Transcription factor activity is modulated by bound coactivator and corepressor proteins like ZBTB7A that recruits NCOR1 and NCOR2 to the androgen response elements/ARE on target genes, negatively regulating androgen receptor signaling and androgen-induced cell proliferation. Transcription activation is also down-regulated by NR0B2. Activated, but not phosphorylated, by HIPK3 and ZIPK/DAPK3. In Papio hamadryas (Hamadryas baboon), this protein is Androgen receptor (AR).